The following is a 202-amino-acid chain: Coiled-coil domain-containing protein mdt-28 (202 aa).

Composition is skewed to acidic residues over residues Met1–Glu15 and Glu28–Tyr45. The disordered stretch occupies residues Met1–Pro83. A coiled-coil region spans residues Ile159 to Ser184.

As to quaternary structure, interacts with mdt-6 and mdt-30. In terms of tissue distribution, ubiquitously expressed in tissues including epidermal, intestinal, pharyngeal and uterine, and is also expressed in vulval muscle cells and gut granules.

It is found in the nucleus. Its subcellular location is the cytoplasm. Its function is as follows. Plays a role in normal growth and development. This chain is Coiled-coil domain-containing protein mdt-28, found in Caenorhabditis elegans.